The sequence spans 1108 residues: Unconventional myosin-Ie (1108 aa).

Residues 19-692 enclose the Myosin motor domain; the sequence is SGVDDMVLLS…SLFLLEEMRE (674 aa). Residue 112-119 coordinates ATP; sequence GESGAGKT. Residues 581 to 591 are actin-binding; it reads PHYIRCIKPNE. The region spanning 695-724 is the IQ domain; sequence YDGYARVIQKSWRKFVARKKYVQMREEASD. Residues 730–922 form the TH1 domain; that stretch reads KERRRNSINR…NKVLQVSIGP (193 aa). The interval 919–966 is disordered; that stretch reads SIGPGLPKNSRPTRRNTTQNTGYSSGTQNANYPVRAAPPPPGYHQNGV. The segment covering 933–949 has biased composition (polar residues); it reads RNTTQNTGYSSGTQNAN. Serine 980 and serine 1002 each carry phosphoserine. The interval 993-1053 is disordered; that stretch reads ARPPLPRQQS…KPQPKPKPQV (61 aa). The span at 999 to 1013 shows a compositional bias: polar residues; sequence RQQSTSSDRVSQTPE. Residues 1035-1052 are compositionally biased toward pro residues; sequence RPPPAGGRPKPQPKPKPQ. An SH3 domain is found at 1051–1108; the sequence is PQVPQCKALYAYDAQDTDELSFNANDIIDIIKEDPSGWWTGRLRGKQGLFPNNYVTKI.

It belongs to the TRAFAC class myosin-kinesin ATPase superfamily. Myosin family. As to quaternary structure, interacts with CALM and F-actin. Interacts (via SH3 domain) with SYNJ1, DNM1 and DNM2. Interacts with ARL14EP. Interacts with CARMIL1. In terms of tissue distribution, expressed in the immune system. In the kidney, predominantly expressed in the glomerulus, including podocytes.

It is found in the cytoplasm. The protein localises to the cytoskeleton. It localises to the cytoplasmic vesicle. Its subcellular location is the clathrin-coated vesicle. The protein resides in the cell junction. Its function is as follows. Actin-based motor molecule with ATPase activity. Unconventional myosins serve in intracellular movements. Their highly divergent tails bind to membranous compartments, which are then moved relative to actin filaments. Binds to membranes containing anionic phospholipids via its tail domain. Involved in clathrin-mediated endocytosis and intracellular movement of clathrin-coated vesicles. Required for normal morphology of the glomerular basement membrane, normal development of foot processes by kidney podocytes and normal kidney function. In dendritic cells, may control the movement of class II-containing cytoplasmic vesicles along the actin cytoskeleton by connecting them with the actin network via ARL14EP and ARL14. The sequence is that of Unconventional myosin-Ie (MYO1E) from Homo sapiens (Human).